Consider the following 535-residue polypeptide: Keratin, type II cytoskeletal 79 (535 aa).

Residues 1-12 (MRSSVSRQTYST) are compositionally biased toward polar residues. The interval 1–52 (MRSSVSRQTYSTKGGFSSNSASGGSGSQARTSFSSVTVSRSSGSGGGAHCGP) is disordered. The tract at residues 1 to 141 (MRSSVSRQTY…DPEIQRVRTQ (141 aa)) is head. Low complexity predominate over residues 32–42 (SFSSVTVSRSS). Over residues 43 to 52 (GSGGGAHCGP) the composition is skewed to gly residues. Positions 142–177 (EREQIKTLNNKFASFIDKVRFLEQQNKVLETKWALL) are coil 1A. One can recognise an IF rod domain in the interval 142–457 (EREQIKTLNN…KLLESEESRM (316 aa)). Residues 178–198 (QEQGQNLGVTRNNLEPLFEAY) are linker 1. Residues 199–290 (LGSMRSTLDR…QLYEMELSQV (92 aa)) form a coil 1B region. The interval 291–314 (QTHVSNTNVVLSMDNNRNLDLDSI) is linker 12. Residues 315–453 (IAEVKAQYEL…ATYRKLLESE (139 aa)) form a coil 2 region. A tail region spans residues 454-535 (ESRMSGECPS…TTVKTSSQRY (82 aa)).

This sequence belongs to the intermediate filament family. As to quaternary structure, heterotetramer of two type I and two type II keratins. In terms of tissue distribution, expressed in skeletal muscle, skin and scalp, but not in any other tissues or organs examined.

The sequence is that of Keratin, type II cytoskeletal 79 (KRT79) from Homo sapiens (Human).